The sequence spans 166 residues: CDP-archaeol synthase (166 aa).

Helical transmembrane passes span 7–27, 55–75, 78–98, 116–136, and 138–158; these read LLLS…GPFI, LIVA…FFTA, TLIS…GAFI, LDFV…ITWY, and FLFI…VAYL.

It belongs to the CDP-archaeol synthase family. Mg(2+) is required as a cofactor.

The protein localises to the cell membrane. It carries out the reaction 2,3-bis-O-(geranylgeranyl)-sn-glycerol 1-phosphate + CTP + H(+) = CDP-2,3-bis-O-(geranylgeranyl)-sn-glycerol + diphosphate. It functions in the pathway membrane lipid metabolism; glycerophospholipid metabolism. Catalyzes the formation of CDP-2,3-bis-(O-geranylgeranyl)-sn-glycerol (CDP-archaeol) from 2,3-bis-(O-geranylgeranyl)-sn-glycerol 1-phosphate (DGGGP) and CTP. This reaction is the third ether-bond-formation step in the biosynthesis of archaeal membrane lipids. The chain is CDP-archaeol synthase from Saccharolobus islandicus (strain L.S.2.15 / Lassen #1) (Sulfolobus islandicus).